The sequence spans 151 residues: MSTLPSGSVSWYKIFQRGQNYMKAWPAEKSLAPMFPEHRVVRATRFGVRFMPAVAVFTLTWQIALGGQLGPAVATAIFACSLPMQGLWWLGKRSITPLPPSLLTCFHEVRQKLNEAGQSLAPVEGVPTYQMLVEVLKRAFKLLDKAFLDDL.

A run of 2 helical transmembrane segments spans residues 46-64 (FGVRFMPAVAVFTLTWQIA) and 70-90 (GPAVATAIFACSLPMQGLWWL).

This sequence belongs to the UPF0208 family.

It localises to the cell inner membrane. This is UPF0208 membrane protein SG1605 from Sodalis glossinidius (strain morsitans).